The following is a 101-amino-acid chain: NAD(P)H-quinone oxidoreductase subunit 4L, chloroplastic (101 aa).

The next 3 membrane-spanning stretches (helical) occupy residues methionine 2–isoleucine 22, methionine 27–isoleucine 46, and isoleucine 61–valine 81.

Belongs to the complex I subunit 4L family. As to quaternary structure, NDH is composed of at least 16 different subunits, 5 of which are encoded in the nucleus.

The protein resides in the plastid. It localises to the chloroplast thylakoid membrane. It carries out the reaction a plastoquinone + NADH + (n+1) H(+)(in) = a plastoquinol + NAD(+) + n H(+)(out). The enzyme catalyses a plastoquinone + NADPH + (n+1) H(+)(in) = a plastoquinol + NADP(+) + n H(+)(out). Functionally, NDH shuttles electrons from NAD(P)H:plastoquinone, via FMN and iron-sulfur (Fe-S) centers, to quinones in the photosynthetic chain and possibly in a chloroplast respiratory chain. The immediate electron acceptor for the enzyme in this species is believed to be plastoquinone. Couples the redox reaction to proton translocation, and thus conserves the redox energy in a proton gradient. The sequence is that of NAD(P)H-quinone oxidoreductase subunit 4L, chloroplastic from Drimys granadensis.